Here is a 184-residue protein sequence, read N- to C-terminus: TRAF-interacting protein with FHA domain-containing protein A (184 aa).

Position 9 is a phosphothreonine (threonine 9). The 57-residue stretch at 47–103 (VKFGRNSNMCQYTFQDKQVSRIQFVLQPFKQFNSSVLSFEIKNMSKKTSLMVDNQEL) folds into the FHA domain. Residues 152 to 184 (NNWPTQNPIPEDGMYSSYFTHRSSPSEMDENEL) are disordered. Residues 168–177 (SYFTHRSSPS) are compositionally biased toward polar residues.

Belongs to the TIFA family. Homooligomer; homooligomerizes following phosphorylation at Thr-9. Interacts with IRAK1, TRAF2 and TRAF6. Interacts with TIFAB; binding to TIFAB inhibits TRAF6 activation, possibly by inducing a conformational change in TIFA. Interacts with ZCCHC11; binding to ZCCHC11 suppresses the TRAF6-dependent activation of NF-kappa-B. Post-translationally, phosphorylated at Thr-9 following detection of ADP-D-glycero-beta-D-manno-heptose (ADP-Heptose) by ALPK1. Phosphorylation at Thr-9 by ALPK1 leads to the formation of an intermolecular binding between the FHA domain and phosphorylated Thr-9, promoting TIFA oligomerization and TIFA-mediated NF-kappa-B activation. As to expression, highly expressed in the spleen and at lower levels in heart, brain, lung, liver, kidney and testes.

The protein localises to the cytoplasm. In terms of biological role, adapter molecule that plays a key role in the activation of pro-inflammatory NF-kappa-B signaling following detection of bacterial pathogen-associated molecular pattern metabolites (PAMPs). Promotes activation of an innate immune response by inducing the oligomerization and polyubiquitination of TRAF6, which leads to the activation of TAK1 and IKK through a proteasome-independent mechanism. TIFA-dependent innate immune response is triggered by ADP-D-glycero-beta-D-manno-heptose (ADP-Heptose), a potent PAMP present in all Gram-negative and some Gram-positive bacteria: ADP-Heptose is recognized by ALPK1, which phosphorylates TIFA at Thr-9, leading to TIFA homooligomerization and subsequent activation of pro-inflammatory NF-kappa-B signaling. This chain is TRAF-interacting protein with FHA domain-containing protein A, found in Mus musculus (Mouse).